Here is a 72-residue protein sequence, read N- to C-terminus: Translation initiation factor IF-1 1 (72 aa).

Residues 1 to 72 (MAKEDRIEMQ…SRARIIFRAK (72 aa)) form the S1-like domain.

This sequence belongs to the IF-1 family. Component of the 30S ribosomal translation pre-initiation complex which assembles on the 30S ribosome in the order IF-2 and IF-3, IF-1 and N-formylmethionyl-tRNA(fMet); mRNA recruitment can occur at any time during PIC assembly.

The protein resides in the cytoplasm. One of the essential components for the initiation of protein synthesis. Stabilizes the binding of IF-2 and IF-3 on the 30S subunit to which N-formylmethionyl-tRNA(fMet) subsequently binds. Helps modulate mRNA selection, yielding the 30S pre-initiation complex (PIC). Upon addition of the 50S ribosomal subunit IF-1, IF-2 and IF-3 are released leaving the mature 70S translation initiation complex. This Methylobacillus flagellatus (strain ATCC 51484 / DSM 6875 / VKM B-1610 / KT) protein is Translation initiation factor IF-1 1.